The chain runs to 479 residues: PRAME family member 18 (479 aa).

The LRR 1 repeat unit spans residues 15–38 (QSLLRDQALAISVLDELPRELFPP). An LRR 1; degenerate repeat occupies 97 to 124 (RWKLQVLEMRDVDENFWTIWSGARLLSC). The stretch at 179–203 (HLCCTKVVNYSMSILNFRNILETVY) is one LRR 2; degenerate repeat. An LRR 3; degenerate repeat occupies 204 to 230 (PDSIQVLEIWNMCWLCMIVEFSRYLSQ). One copy of the LRR 4; degenerate repeat lies at 231–265 (MRNLRKLFISDGCRYLLSSDSQEQLVAEFSSVLLR). 5 LRR repeats span residues 266–291 (LENL…IRCL), 292–323 (RSPL…SQLK), 324–342 (QLNL…PLRA), 348–375 (AATL…ALSR), and 376–400 (CSNL…LLRH).

The protein belongs to the PRAME family.

The protein is PRAME family member 18 of Homo sapiens (Human).